We begin with the raw amino-acid sequence, 189 residues long: Glucose-6-phosphate isomerase (189 aa).

Residues His88, His90, Glu97, and His136 each contribute to the Fe cation site.

Belongs to the archaeal-type GPI family. As to quaternary structure, homodimer. Fe cation serves as cofactor.

Its subcellular location is the cytoplasm. It catalyses the reaction alpha-D-glucose 6-phosphate = beta-D-fructose 6-phosphate. Its pathway is carbohydrate degradation; glycolysis; D-glyceraldehyde 3-phosphate and glycerone phosphate from D-glucose: step 2/4. In Pyrococcus horikoshii (strain ATCC 700860 / DSM 12428 / JCM 9974 / NBRC 100139 / OT-3), this protein is Glucose-6-phosphate isomerase (pgiA).